The following is a 728-amino-acid chain: Polyribonucleotide nucleotidyltransferase (728 aa).

Mg(2+)-binding residues include D503 and D509. One can recognise a KH domain in the interval P570–I629. The 75-residue stretch at G639–K713 folds into the S1 motif domain.

It belongs to the polyribonucleotide nucleotidyltransferase family. Mg(2+) is required as a cofactor.

It is found in the cytoplasm. It carries out the reaction RNA(n+1) + phosphate = RNA(n) + a ribonucleoside 5'-diphosphate. In terms of biological role, involved in mRNA degradation. Catalyzes the phosphorolysis of single-stranded polyribonucleotides processively in the 3'- to 5'-direction. The sequence is that of Polyribonucleotide nucleotidyltransferase from Chlorobium chlorochromatii (strain CaD3).